The primary structure comprises 230 residues: Ion-translocating oxidoreductase complex subunit E (230 aa).

A run of 6 helical transmembrane segments spans residues 18 to 38 (ALVQ…ATNA), 39 to 59 (LGLG…ISAL), 63 to 83 (TPAE…VSAV), 86 to 106 (LINA…PLIV), 125 to 145 (ALSA…MFVL), and 182 to 202 (PFLL…MLAV).

It belongs to the NqrDE/RnfAE family. The complex is composed of six subunits: RnfA, RnfB, RnfC, RnfD, RnfE and RnfG.

Its subcellular location is the cell inner membrane. Its function is as follows. Part of a membrane-bound complex that couples electron transfer with translocation of ions across the membrane. The protein is Ion-translocating oxidoreductase complex subunit E of Citrobacter koseri (strain ATCC BAA-895 / CDC 4225-83 / SGSC4696).